A 250-amino-acid polypeptide reads, in one-letter code: Ubiquinone biosynthesis O-methyltransferase (250 aa).

Residues R41, G72, D93, and M136 each contribute to the S-adenosyl-L-methionine site.

Belongs to the methyltransferase superfamily. UbiG/COQ3 family.

The enzyme catalyses a 3-demethylubiquinol + S-adenosyl-L-methionine = a ubiquinol + S-adenosyl-L-homocysteine + H(+). It carries out the reaction a 3-(all-trans-polyprenyl)benzene-1,2-diol + S-adenosyl-L-methionine = a 2-methoxy-6-(all-trans-polyprenyl)phenol + S-adenosyl-L-homocysteine + H(+). Its pathway is cofactor biosynthesis; ubiquinone biosynthesis. Functionally, O-methyltransferase that catalyzes the 2 O-methylation steps in the ubiquinone biosynthetic pathway. This is Ubiquinone biosynthesis O-methyltransferase from Agrobacterium fabrum (strain C58 / ATCC 33970) (Agrobacterium tumefaciens (strain C58)).